The chain runs to 200 residues: Recombination protein RecR (200 aa).

The segment at 58-73 (CQVCGNMDTENICGIC) adopts a C4-type zinc-finger fold. In terms of domain architecture, Toprim spans 81–176 (SVIAIVETVA…KISRLASGIP (96 aa)).

This sequence belongs to the RecR family.

May play a role in DNA repair. It seems to be involved in an RecBC-independent recombinational process of DNA repair. It may act with RecF and RecO. The protein is Recombination protein RecR of Rickettsia bellii (strain OSU 85-389).